We begin with the raw amino-acid sequence, 234 residues long: Large ribosomal subunit protein uL1 (234 aa).

Belongs to the universal ribosomal protein uL1 family. In terms of assembly, part of the 50S ribosomal subunit.

Its function is as follows. Binds directly to 23S rRNA. The L1 stalk is quite mobile in the ribosome, and is involved in E site tRNA release. In terms of biological role, protein L1 is also a translational repressor protein, it controls the translation of the L11 operon by binding to its mRNA. This is Large ribosomal subunit protein uL1 from Prochlorococcus marinus (strain SARG / CCMP1375 / SS120).